The following is a 450-amino-acid chain: Chromosomal replication initiator protein DnaA (450 aa).

The segment at Met1–Leu84 is domain I, interacts with DnaA modulators. The tract at residues Leu84–Ser109 is domain II. The tract at residues Asp110–Ala328 is domain III, AAA+ region. Residues Gly154, Gly156, Lys157, and Thr158 each contribute to the ATP site. Positions Asn329–Lys450 are domain IV, binds dsDNA.

Belongs to the DnaA family. As to quaternary structure, oligomerizes as a right-handed, spiral filament on DNA at oriC.

It localises to the cytoplasm. Its function is as follows. Plays an essential role in the initiation and regulation of chromosomal replication. ATP-DnaA binds to the origin of replication (oriC) to initiate formation of the DNA replication initiation complex once per cell cycle. Binds the DnaA box (a 9 base pair repeat at the origin) and separates the double-stranded (ds)DNA. Forms a right-handed helical filament on oriC DNA; dsDNA binds to the exterior of the filament while single-stranded (ss)DNA is stabiized in the filament's interior. The ATP-DnaA-oriC complex binds and stabilizes one strand of the AT-rich DNA unwinding element (DUE), permitting loading of DNA polymerase. After initiation quickly degrades to an ADP-DnaA complex that is not apt for DNA replication. Binds acidic phospholipids. This is Chromosomal replication initiator protein DnaA from Streptococcus equi subsp. zooepidemicus (strain H70).